Here is a 196-residue protein sequence, read N- to C-terminus: Endoribonuclease YbeY (196 aa).

Zn(2+) is bound by residues H120, H124, and H130.

Belongs to the endoribonuclease YbeY family. Zn(2+) serves as cofactor.

The protein localises to the cytoplasm. Single strand-specific metallo-endoribonuclease involved in late-stage 70S ribosome quality control and in maturation of the 3' terminus of the 16S rRNA. The polypeptide is Endoribonuclease YbeY (Corynebacterium diphtheriae (strain ATCC 700971 / NCTC 13129 / Biotype gravis)).